We begin with the raw amino-acid sequence, 123 residues long: Small ribosomal subunit protein uS12 (123 aa).

The interval 1–24 (MPTINQLVRKGRTPQKVKSKVPAM) is disordered. Residues 9-19 (RKGRTPQKVKS) are compositionally biased toward basic residues. Aspartate 89 carries the post-translational modification 3-methylthioaspartic acid.

It belongs to the universal ribosomal protein uS12 family. As to quaternary structure, part of the 30S ribosomal subunit. Contacts proteins S8 and S17. May interact with IF1 in the 30S initiation complex.

Functionally, with S4 and S5 plays an important role in translational accuracy. In terms of biological role, interacts with and stabilizes bases of the 16S rRNA that are involved in tRNA selection in the A site and with the mRNA backbone. Located at the interface of the 30S and 50S subunits, it traverses the body of the 30S subunit contacting proteins on the other side and probably holding the rRNA structure together. The combined cluster of proteins S8, S12 and S17 appears to hold together the shoulder and platform of the 30S subunit. This is Small ribosomal subunit protein uS12 from Sphingopyxis alaskensis (strain DSM 13593 / LMG 18877 / RB2256) (Sphingomonas alaskensis).